The primary structure comprises 167 residues: uncharacterized protein (167 aa).

The protein resides in the plastid. It is found in the chloroplast. This is an uncharacterized protein from Mesostigma viride (Green alga).